Reading from the N-terminus, the 72-residue chain is Large ribosomal subunit protein bL31 (72 aa).

This sequence belongs to the bacterial ribosomal protein bL31 family. Type A subfamily. As to quaternary structure, part of the 50S ribosomal subunit.

In terms of biological role, binds the 23S rRNA. This is Large ribosomal subunit protein bL31 from Deinococcus geothermalis (strain DSM 11300 / CIP 105573 / AG-3a).